The following is a 211-amino-acid chain: Adenylate kinase (211 aa).

10-15 (GSGKGT) contacts ATP. The segment at 30-59 (STGDLFRENILNSTTLGKEIKKIVEKGELV) is NMP. Residues T31, R36, 57–59 (ELV), 85–88 (GFPR), and Q92 contribute to the AMP site. The tract at residues 121–158 (GRRICKSCNNIFNIYTLATKKNGICDVCKGDLYQREDD) is LID. R122 serves as a coordination point for ATP. Zn(2+) contacts are provided by C125 and C128. 131–132 (IF) provides a ligand contact to ATP. Residues C145 and C148 each coordinate Zn(2+). AMP-binding residues include R155 and R166. V194 is a binding site for ATP.

It belongs to the adenylate kinase family. In terms of assembly, monomer.

It is found in the cytoplasm. The catalysed reaction is AMP + ATP = 2 ADP. The protein operates within purine metabolism; AMP biosynthesis via salvage pathway; AMP from ADP: step 1/1. Catalyzes the reversible transfer of the terminal phosphate group between ATP and AMP. Plays an important role in cellular energy homeostasis and in adenine nucleotide metabolism. This chain is Adenylate kinase, found in Borrelia garinii subsp. bavariensis (strain ATCC BAA-2496 / DSM 23469 / PBi) (Borreliella bavariensis).